The following is a 439-amino-acid chain: Probable N-acetylmuramidase (439 aa).

The first 57 residues, 1–57, serve as a signal peptide directing secretion; that stretch reads MPVSRIKVKNRHLKKKAKKPLAFYKPATKFAGAVLIAGTLTTTHELLLQQTSPMVQA. 2 disordered regions span residues 218–241 and 287–320; these read SAGTSNSGGSTATNTNNNSNTSST and SSSSSNTNSSTSSGNSAGTTTPTTSVTPAKPASQ. One can recognise a LysM 1 domain in the interval 241–284; sequence TTYTVKSGDTLWGISQKYGISVAQIQSANNLKSTVIYIGQKLVL. Over residues 287–319 the composition is skewed to low complexity; it reads SSSSSNTNSSTSSGNSAGTTTPTTSVTPAKPAS. Positions 321 to 364 constitute a LysM 2 domain; it reads TTIKVKSGDTLWGLSVKYKTTIAQLKSWNHLNSDTIFIGQNLIV. A disordered region spans residues 372–393; it reads SSSTGSSSASTSSTSNSSAASN. A LysM 3 domain is found at 395–438; it reads SIHKVVKGDTLWGLSQKSGSPIASIKAWNHLSSDTILIGQYLRI.

It belongs to the glycosyl hydrolase 73 family.

The protein resides in the secreted. The enzyme catalyses Hydrolysis of (1-&gt;4)-beta-linkages between N-acetylmuramic acid and N-acetyl-D-glucosamine residues in a peptidoglycan and between N-acetyl-D-glucosamine residues in chitodextrins.. Its function is as follows. Required for cell separation during growth. This chain is Probable N-acetylmuramidase (acmA), found in Lactococcus lactis subsp. lactis (strain IL1403) (Streptococcus lactis).